The chain runs to 40 residues: Dolichyl-diphosphooligosaccharide--protein glycosyltransferase subunit 4 (40 aa).

At 1–4 the chain is on the lumenal side; the sequence is MITD. The chain crosses the membrane as a helical span at residues 5–25; that stretch reads VQLAIFSNVLGVFLFLLVVAY. The Cytoplasmic segment spans residues 26 to 40; the sequence is HYINANTGKPSAKAK.

This sequence belongs to the OST4 family. Component of the oligosaccharyltransferase (OST) complex.

It localises to the endoplasmic reticulum membrane. Subunit of the oligosaccharyl transferase (OST) complex that catalyzes the initial transfer of a defined glycan (Glc(3)Man(9)GlcNAc(2) in eukaryotes) from the lipid carrier dolichol-pyrophosphate to an asparagine residue within an Asn-X-Ser/Thr consensus motif in nascent polypeptide chains, the first step in protein N-glycosylation. N-glycosylation occurs cotranslationally and the complex associates with the Sec61 complex at the channel-forming translocon complex that mediates protein translocation across the endoplasmic reticulum (ER). All subunits are required for a maximal enzyme activity. This chain is Dolichyl-diphosphooligosaccharide--protein glycosyltransferase subunit 4, found in Drosophila erecta (Fruit fly).